The sequence spans 229 residues: Leucyl/phenylalanyl-tRNA--protein transferase (229 aa).

The protein belongs to the L/F-transferase family.

The protein localises to the cytoplasm. It carries out the reaction N-terminal L-lysyl-[protein] + L-leucyl-tRNA(Leu) = N-terminal L-leucyl-L-lysyl-[protein] + tRNA(Leu) + H(+). It catalyses the reaction N-terminal L-arginyl-[protein] + L-leucyl-tRNA(Leu) = N-terminal L-leucyl-L-arginyl-[protein] + tRNA(Leu) + H(+). The enzyme catalyses L-phenylalanyl-tRNA(Phe) + an N-terminal L-alpha-aminoacyl-[protein] = an N-terminal L-phenylalanyl-L-alpha-aminoacyl-[protein] + tRNA(Phe). Its function is as follows. Functions in the N-end rule pathway of protein degradation where it conjugates Leu, Phe and, less efficiently, Met from aminoacyl-tRNAs to the N-termini of proteins containing an N-terminal arginine or lysine. This Pseudomonas syringae pv. tomato (strain ATCC BAA-871 / DC3000) protein is Leucyl/phenylalanyl-tRNA--protein transferase.